Here is a 71-residue protein sequence, read N- to C-terminus: Protein CYSTEINE-RICH TRANSMEMBRANE MODULE 8 (71 aa).

Polar residues predominate over residues 1–22 (MNQSAQNYFSVQKPSETSSGPY). Residues 1–35 (MNQSAQNYFSVQKPSETSSGPYTSPPPIGYPTRDA) are disordered. Residues 48 to 64 (NSKGVNPEGCCAAICCC) form a helical membrane-spanning segment.

The protein belongs to the CYSTM1 family. In terms of tissue distribution, mostly expressed in stems, siliques, roots and flowers and, to a lower extent, in leaves.

Its subcellular location is the membrane. It localises to the nucleus. In terms of biological role, involved in resistance to abiotic stress. In Arabidopsis thaliana (Mouse-ear cress), this protein is Protein CYSTEINE-RICH TRANSMEMBRANE MODULE 8.